The following is a 455-amino-acid chain: Anaerobic glycerol-3-phosphate dehydrogenase subunit B (455 aa).

Belongs to the anaerobic G-3-P dehydrogenase subunit B family. In terms of assembly, composed of a catalytic GlpA/B dimer and of membrane bound GlpC. FMN serves as cofactor.

It carries out the reaction a quinone + sn-glycerol 3-phosphate = dihydroxyacetone phosphate + a quinol. Its pathway is polyol metabolism; glycerol degradation via glycerol kinase pathway; glycerone phosphate from sn-glycerol 3-phosphate (anaerobic route): step 1/1. Conversion of glycerol 3-phosphate to dihydroxyacetone. Uses fumarate or nitrate as electron acceptor. In Aliivibrio fischeri (strain ATCC 700601 / ES114) (Vibrio fischeri), this protein is Anaerobic glycerol-3-phosphate dehydrogenase subunit B.